The primary structure comprises 148 residues: Large ribosomal subunit protein bL9 (148 aa).

This sequence belongs to the bacterial ribosomal protein bL9 family.

Its function is as follows. Binds to the 23S rRNA. In Leptospira biflexa serovar Patoc (strain Patoc 1 / Ames), this protein is Large ribosomal subunit protein bL9.